Reading from the N-terminus, the 618-residue chain is Chaperone protein DnaK (618 aa).

A Phosphothreonine; by autocatalysis modification is found at threonine 175. Positions 579-618 are disordered; that stretch reads GAPGAEGFDSNMAGEANAGQNANNDDNVVDADYKVEDDEK. Residues 591–604 show a composition bias toward low complexity; it reads AGEANAGQNANNDD.

Belongs to the heat shock protein 70 family.

In terms of biological role, acts as a chaperone. The protein is Chaperone protein DnaK of Clostridium tetani (strain Massachusetts / E88).